Consider the following 228-residue polypeptide: UPF0758 protein CKR_0778 (228 aa).

Residues 106–228 (RICSPQDAAV…FISLKEKGIL (123 aa)) form the MPN domain. Histidine 177, histidine 179, and aspartate 190 together coordinate Zn(2+). Residues 177 to 190 (HNHPSGDPSPSNED) carry the JAMM motif motif.

Belongs to the UPF0758 family.

The sequence is that of UPF0758 protein CKR_0778 from Clostridium kluyveri (strain NBRC 12016).